A 323-amino-acid polypeptide reads, in one-letter code: Mas-related G-protein coupled receptor member X1 (323 aa).

Topologically, residues M1–S30 are extracellular. N16 is a glycosylation site (N-linked (GlcNAc...) asparagine). A helical membrane pass occupies residues F31–L51. Residues G52–A59 lie on the Cytoplasmic side of the membrane. The chain crosses the membrane as a helical span at residues I60–I80. At D81 to E100 the chain is on the extracellular side. The chain crosses the membrane as a helical span at residues I101–S121. Residues T122–S143 lie on the Cytoplasmic side of the membrane. Residues A144 to F164 traverse the membrane as a helical segment. The Extracellular segment spans residues S165–D180. Residues F181 to L201 form a helical membrane-spanning segment. Topologically, residues L202–M226 are cytoplasmic. Residues V227–I247 traverse the membrane as a helical segment. Residues H248–Q258 are Extracellular-facing. The helical transmembrane segment at V259–G279 threads the bilayer. Topologically, residues S280 to C323 are cytoplasmic.

Belongs to the G-protein coupled receptor 1 family. Mas subfamily. As to expression, uniquely localized in a subset of small dorsal root and trigeminal sensory neurons. Associated preferentially with IB4 class of small-diameter somatosensory afferents (also known as nociceptors).

Its subcellular location is the cell membrane. Orphan receptor activated by neuropeptides terminating in Arg-Phe or Arg-Phe-amide. Mediates its action by association with G proteins that activate a phosphatidylinositol-calcium second messenger system. Its effect is mediated by G(q) and G(11) proteins. May regulate the function of nociceptive neurons by modulation of pain perception. This chain is Mas-related G-protein coupled receptor member X1 (Mrgprx1), found in Rattus norvegicus (Rat).